Consider the following 100-residue polypeptide: Urease subunit gamma (100 aa).

The protein belongs to the urease gamma subunit family. In terms of assembly, heterotrimer of UreA (gamma), UreB (beta) and UreC (alpha) subunits. Three heterotrimers associate to form the active enzyme.

It is found in the cytoplasm. It carries out the reaction urea + 2 H2O + H(+) = hydrogencarbonate + 2 NH4(+). It participates in nitrogen metabolism; urea degradation; CO(2) and NH(3) from urea (urease route): step 1/1. This Haemophilus influenzae (strain 86-028NP) protein is Urease subunit gamma.